The chain runs to 470 residues: Solute carrier family 7 member 13 (470 aa).

Over 1-11 (MDRGEKIQLKR) the chain is Cytoplasmic. The chain crosses the membrane as a helical span at residues 12 to 32 (VFGYWWGTSFLLINIIGAGIF). At 33–45 (VSPKGVLAYSCMN) the chain is on the extracellular side. Residues 46 to 66 (VGVSLCVWAGCAILAMTSTLC) form a helical membrane-spanning segment. Topologically, residues 67–87 (SAEISISFPCSGAQYYFLKRY) are cytoplasmic. The chain crosses the membrane as a helical span at residues 88-108 (FGSTVAFLNLWTSLFLGSGVV). Over 109–128 (AGQALLLAEYSIQPFFPSCS) the chain is Extracellular. Residues 129–149 (VPKLPKKCLALAMLWIVGILT) form a helical membrane-spanning segment. Residues 150-162 (SRGVKEVTWLQIA) lie on the Cytoplasmic side of the membrane. Residues 163–183 (SSVLKVSILSFISLTGVVFLI) form a helical membrane-spanning segment. Residues 184-206 (RGKKENVERFQNAFDAELPDISH) are Extracellular-facing. A helical transmembrane segment spans residues 207–227 (LIQAIFQGYFAYSGGACFTLI). The Cytoplasmic portion of the chain corresponds to 228 to 240 (AGELKKPRTTIPK). The chain crosses the membrane as a helical span at residues 241-261 (CIFTALPLVTVVYLLVNISYL). The Extracellular portion of the chain corresponds to 262–287 (TVLTPREILSSDAVAITWADRAFPSL). Residues 288 to 308 (AWIMPFAISTSLFSNLLISIF) traverse the membrane as a helical segment. The Cytoplasmic portion of the chain corresponds to 309–336 (KSSRPIYLASQEGQLPLLFNTLNSHSSP). Residues 337–357 (FTAVLLLVTLGSLAIILTSLI) form a helical membrane-spanning segment. A topological domain (extracellular) is located at residue aspartate 358. A helical transmembrane segment spans residues 359–379 (LINYIFFTGSLWSILLMIGIL). The Cytoplasmic portion of the chain corresponds to 380–393 (RRRYQEPNLSIPYK). The chain crosses the membrane as a helical span at residues 394–414 (VFLSFPLATIVIDVGLVVIPL). At 415–421 (VKSPNVH) the chain is on the extracellular side. A helical transmembrane segment spans residues 422–442 (YVYVLLLVLSGLLFYIPLIHF). Topologically, residues 443–470 (KIRLAWFEKMTCYLQLLFNICLPDVSEE) are cytoplasmic.

The protein belongs to the amino acid-polyamine-organocation (APC) superfamily. In terms of assembly, disulfide-linked heterodimer composed of the catalytic light subunit SLC7A13 and the heavy subunit SLC3A1. As to expression, expressed in the kidney.

The protein resides in the apical cell membrane. It catalyses the reaction L-cystine(out) + L-aspartate(in) = L-cystine(in) + L-aspartate(out). The catalysed reaction is L-cystine(out) = L-cystine(in). The enzyme catalyses L-aspartate(in) + L-glutamate(out) = L-aspartate(out) + L-glutamate(in). It carries out the reaction L-aspartate(in) + L-glutamine(out) = L-aspartate(out) + L-glutamine(in). It catalyses the reaction L-aspartate(in) + L-methionine(out) = L-aspartate(out) + L-methionine(in). The catalysed reaction is L-leucine(out) + L-aspartate(in) = L-leucine(in) + L-aspartate(out). The enzyme catalyses L-valine(out) + L-aspartate(in) = L-valine(in) + L-aspartate(out). It carries out the reaction L-aspartate(in) + L-phenylalanine(out) = L-aspartate(out) + L-phenylalanine(in). It catalyses the reaction L-tyrosine(out) + L-aspartate(in) = L-tyrosine(in) + L-aspartate(out). The catalysed reaction is L-tryptophan(out) + L-aspartate(in) = L-tryptophan(in) + L-aspartate(out). Functionally, associates with SLC3A1/rBAT to form a functional heterodimeric complex that transports anionic and neutral amino acids across the apical plasma membrane of renal epithelium. Preferentially mediates exchange transport, but can also operate via facilitated diffusion. May act as a major transporter for L-cystine in late proximal tubules, ensuring its reabsorption from the luminal fluid in exchange for cytosolic L-glutamate or L-aspartate. In Homo sapiens (Human), this protein is Solute carrier family 7 member 13 (SLC7A13).